Reading from the N-terminus, the 448-residue chain is NADH oxidase (448 aa).

FAD is bound by residues glycine 7–alanine 11, cysteine 42, valine 80, alanine 110–alanine 113, and arginine 132. Cysteine 42 serves as the catalytic Redox-active. NAD(+) contacts are provided by residues valine 152–glycine 167, glutamate 179, and glycine 243. FAD contacts are provided by residues threonine 271–aspartate 281, glycine 299, and threonine 300. Valine 328 serves as a coordination point for NAD(+). Tyrosine 423 is a binding site for FAD.

The protein belongs to the class-III pyridine nucleotide-disulfide oxidoreductase family. FAD is required as a cofactor.

The enzyme catalyses 2 NADH + O2 + 2 H(+) = 2 NAD(+) + 2 H2O. Catalyzes the four-electron reduction of molecular oxygen to water. The polypeptide is NADH oxidase (Methanocaldococcus jannaschii (strain ATCC 43067 / DSM 2661 / JAL-1 / JCM 10045 / NBRC 100440) (Methanococcus jannaschii)).